The following is a 227-amino-acid chain: MICOS complex subunit Mic19 (227 aa).

Glycine 2 is lipidated: N-myristoyl glycine. A Phosphoserine modification is found at serine 29. Positions 32–57 are disordered; it reads VIDRMKESSPSGSKSQRYSSVYGASV. Polar residues predominate over residues 39–50; the sequence is SSPSGSKSQRYS. At tyrosine 49 the chain carries Phosphotyrosine. Serine 50, serine 51, serine 56, and serine 58 each carry phosphoserine. The interval 73–92 is disordered; sequence EQAKKESEHQRRLKQARDLE. Lysine 142 carries the post-translational modification N6-acetyllysine. Positions 180–222 constitute a CHCH domain; the sequence is HPVCADLQTKILQCYRQNTQQTLSCSALASQYMHCVNHAKQSM. Short sequence motifs (cx9C motif) lie at residues 183–193 and 204–214; these read CADLQTKILQC and CSALASQYMHC. 2 cysteine pairs are disulfide-bonded: cysteine 183-cysteine 214 and cysteine 193-cysteine 204.

Belongs to the MICOS complex subunit Mic19 family. Metazoan Mic19 subfamily. In terms of assembly, component of the mitochondrial contact site and cristae organizing system (MICOS) complex, composed of at least MICOS10/MIC10, CHCHD3/MIC19, CHCHD6/MIC25, APOOL/MIC27, IMMT/MIC60, APOO/MIC23/MIC26 and MICOS13/MIC13. This complex was also known under the names MINOS or MitOS complex. The MICOS complex associates with mitochondrial outer membrane proteins SAMM50, MTX1 and MTX2 (together described as components of the mitochondrial outer membrane sorting assembly machinery (SAM) complex) and DNAJC11, mitochondrial inner membrane protein TMEM11 and with HSPA9. The MICOS and SAM complexes together with DNAJC11 are part of a large protein complex spanning both membranes termed the mitochondrial intermembrane space bridging (MIB) complex. Interacts with HSPA1A/HSPA1B and OPA1, preferentially with the soluble OPA1 form.

Its subcellular location is the mitochondrion inner membrane. It is found in the cytoplasm. It localises to the nucleus. The protein localises to the mitochondrion. Its function is as follows. Component of the MICOS complex, a large protein complex of the mitochondrial inner membrane that plays crucial roles in the maintenance of crista junctions, inner membrane architecture, and formation of contact sites to the outer membrane. Has also been shown to function as a transcription factor which binds to the BAG1 promoter and represses BAG1 transcription. Plays an important role in the maintenance of the MICOS complex stability and the mitochondrial cristae morphology. This Mus musculus (Mouse) protein is MICOS complex subunit Mic19 (Chchd3).